Consider the following 873-residue polypeptide: Leucine--tRNA ligase (873 aa).

The short motif at 41 to 51 (PYPSGRIHMGH) is the 'HIGH' region element. The short motif at 645-649 (KMSKS) is the 'KMSKS' region element. Lys648 contributes to the ATP binding site.

It belongs to the class-I aminoacyl-tRNA synthetase family.

The protein localises to the cytoplasm. It catalyses the reaction tRNA(Leu) + L-leucine + ATP = L-leucyl-tRNA(Leu) + AMP + diphosphate. The protein is Leucine--tRNA ligase of Cereibacter sphaeroides (strain ATCC 17025 / ATH 2.4.3) (Rhodobacter sphaeroides).